A 234-amino-acid polypeptide reads, in one-letter code: Probable pectate lyase F (234 aa).

Positions 1–17 (MFSRIALLPAFLPVALA) are cleaved as a signal peptide. N-linked (GlcNAc...) asparagine glycans are attached at residues asparagine 168 and asparagine 194.

Belongs to the polysaccharide lyase 3 family. Requires Ca(2+) as cofactor.

The protein resides in the secreted. It carries out the reaction Eliminative cleavage of (1-&gt;4)-alpha-D-galacturonan to give oligosaccharides with 4-deoxy-alpha-D-galact-4-enuronosyl groups at their non-reducing ends.. Pectinolytic enzyme consist of four classes of enzymes: pectin lyase, polygalacturonase, pectin methylesterase and rhamnogalacturonase. Among pectinolytic enzymes, pectin lyase is the most important in depolymerization of pectin, since it cleaves internal glycosidic bonds of highly methylated pectins. Favors pectate, the anion, over pectin, the methyl ester. In Aspergillus flavus (strain ATCC 200026 / FGSC A1120 / IAM 13836 / NRRL 3357 / JCM 12722 / SRRC 167), this protein is Probable pectate lyase F (plyF).